Reading from the N-terminus, the 543-residue chain is Splicing factor U2af large subunit B (543 aa).

The segment covering Met1–Asp10 has biased composition (gly residues). The tract at residues Met1–Ser171 is disordered. Basic and acidic residues-rich tracts occupy residues Val17–Arg78 and Glu88–Gly114. Residues His115–Ser126 are compositionally biased toward basic residues. 3 consecutive RRM domains span residues Arg207–Asp290, Asp327–Gln405, and Gln446–Asn532.

The protein belongs to the splicing factor SR family.

The protein resides in the nucleus. Functionally, necessary for the splicing of pre-mRNA. In Triticum aestivum (Wheat), this protein is Splicing factor U2af large subunit B (U2AF65B).